The primary structure comprises 637 residues: Chaperone protein HtpG (637 aa).

The tract at residues 1 to 345 is a; substrate-binding; that stretch reads MSQQETHGFQ…SNDLPLNVSR (345 aa). A b region spans residues 346 to 562; the sequence is EILQDNHITK…EGEMSSQMIK (217 aa). The c stretch occupies residues 563 to 637; sequence LMQAAGQPVP…MNQMLLANLK (75 aa).

The protein belongs to the heat shock protein 90 family. Homodimer.

Its subcellular location is the cytoplasm. Molecular chaperone. Has ATPase activity. This chain is Chaperone protein HtpG, found in Shewanella sp. (strain ANA-3).